The chain runs to 123 residues: Large ribosomal subunit protein bL19c (123 aa).

The protein belongs to the bacterial ribosomal protein bL19 family.

It localises to the plastid. It is found in the chloroplast. The polypeptide is Large ribosomal subunit protein bL19c (Pyropia yezoensis (Susabi-nori)).